The primary structure comprises 178 residues: Fatty-acid and retinol-binding protein 1 (178 aa).

The signal sequence occupies residues 1 to 16; sequence MYHQLILMALIGVIMA. Coiled coils occupy residues 67–89 and 122–154; these read DAALEALKNKSDKLYQKAVELRN and QKLDMEKLKQAARDIIAKYEALNEETKEELKAT.

It belongs to the fatty-acid and retinol-binding protein (FARBP) family. In terms of processing, not glycosylated.

The protein resides in the secreted. Binds retinol and different fatty acids. This is Fatty-acid and retinol-binding protein 1 from Litomosoides sigmodontis (Filarial nematode worm).